The chain runs to 680 residues: Cytosolic endo-beta-N-acetylglucosaminidase 1 (680 aa).

Positions 1–15 (MSVAPPAPSPPPFDP) are enriched in pro residues. Residues 1–21 (MSVAPPAPSPPPFDPTKPSTP) form a disordered region.

The protein belongs to the glycosyl hydrolase 85 family.

It localises to the cytoplasm. The protein resides in the cytosol. It catalyses the reaction an N(4)-(oligosaccharide-(1-&gt;3)-[oligosaccharide-(1-&gt;6)]-beta-D-Man-(1-&gt;4)-beta-D-GlcNAc-(1-&gt;4)-alpha-D-GlcNAc)-L-asparaginyl-[protein] + H2O = an oligosaccharide-(1-&gt;3)-[oligosaccharide-(1-&gt;6)]-beta-D-Man-(1-&gt;4)-D-GlcNAc + N(4)-(N-acetyl-beta-D-glucosaminyl)-L-asparaginyl-[protein]. In terms of biological role, endoglycosidase that releases N-glycans from glycoproteins by cleaving the beta-1,4-glycosidic bond in the N,N'-diacetylchitobiose core. Involved in the production of high-mannose type N-glycans during plant development and fruit maturation. This chain is Cytosolic endo-beta-N-acetylglucosaminidase 1, found in Arabidopsis thaliana (Mouse-ear cress).